The following is a 600-amino-acid chain: Dihydroxy-acid dehydratase (600 aa).

Asp-82 contacts Mg(2+). Position 123 (Cys-123) interacts with [2Fe-2S] cluster. 2 residues coordinate Mg(2+): Asp-124 and Lys-125. Lys-125 is subject to N6-carboxylysine. [2Fe-2S] cluster is bound at residue Cys-192. Glu-489 provides a ligand contact to Mg(2+). Ser-515 (proton acceptor) is an active-site residue.

It belongs to the IlvD/Edd family. Homodimer. It depends on [2Fe-2S] cluster as a cofactor. Mg(2+) is required as a cofactor.

It carries out the reaction (2R)-2,3-dihydroxy-3-methylbutanoate = 3-methyl-2-oxobutanoate + H2O. The catalysed reaction is (2R,3R)-2,3-dihydroxy-3-methylpentanoate = (S)-3-methyl-2-oxopentanoate + H2O. Its pathway is amino-acid biosynthesis; L-isoleucine biosynthesis; L-isoleucine from 2-oxobutanoate: step 3/4. The protein operates within amino-acid biosynthesis; L-valine biosynthesis; L-valine from pyruvate: step 3/4. Functions in the biosynthesis of branched-chain amino acids. Catalyzes the dehydration of (2R,3R)-2,3-dihydroxy-3-methylpentanoate (2,3-dihydroxy-3-methylvalerate) into 2-oxo-3-methylpentanoate (2-oxo-3-methylvalerate) and of (2R)-2,3-dihydroxy-3-methylbutanoate (2,3-dihydroxyisovalerate) into 2-oxo-3-methylbutanoate (2-oxoisovalerate), the penultimate precursor to L-isoleucine and L-valine, respectively. The polypeptide is Dihydroxy-acid dehydratase (Phocaeicola vulgatus (strain ATCC 8482 / DSM 1447 / JCM 5826 / CCUG 4940 / NBRC 14291 / NCTC 11154) (Bacteroides vulgatus)).